A 372-amino-acid polypeptide reads, in one-letter code: MAATSDIVEKTHILQKYLELDQRGAIIAEYVWIDSEGGLRSKGRTLNKKVTSVDSLPEWNFDGSSTGQAPGHDSDIYLKPVAFYPDPFRRGDNIVVLAECWNNDGTPNKFNHRHEAAKLFEAHKDAEMWFGLEQEYTLFDQYDQVYGWPKGGFPAPQGPYYCGVGAGKVFARDVIEAHYRACLYAGVNISGINAEVMPSQWEFQVGPCEGIAMADQLWIARYFLHRVAEEFGVKVSLHPKPLKGDWNGAGCHTNVSTKLMRAPGGMKYIEDAIEKLSKRHNEHIKLYGADNEQRLTGRHETASMSTFSSGVANRGASIRIPRSVNKEGYGYFEDRRPASNIDPYLVTGIMCETVCGAIENANMTKEYERESL.

The GS beta-grasp domain occupies I26 to G105. Residues H112–L372 enclose the GS catalytic domain.

This sequence belongs to the glutamine synthetase family. Homooctamer.

The protein localises to the cytoplasm. It carries out the reaction L-glutamate + NH4(+) + ATP = L-glutamine + ADP + phosphate + H(+). This is Glutamine synthetase (GLN1) from Kluyveromyces lactis (strain ATCC 8585 / CBS 2359 / DSM 70799 / NBRC 1267 / NRRL Y-1140 / WM37) (Yeast).